A 367-amino-acid polypeptide reads, in one-letter code: Cobalt-precorrin-5B C(1)-methyltransferase (367 aa).

It belongs to the CbiD family.

The enzyme catalyses Co-precorrin-5B + S-adenosyl-L-methionine = Co-precorrin-6A + S-adenosyl-L-homocysteine. The protein operates within cofactor biosynthesis; adenosylcobalamin biosynthesis; cob(II)yrinate a,c-diamide from sirohydrochlorin (anaerobic route): step 6/10. Functionally, catalyzes the methylation of C-1 in cobalt-precorrin-5B to form cobalt-precorrin-6A. The protein is Cobalt-precorrin-5B C(1)-methyltransferase of Thermosynechococcus vestitus (strain NIES-2133 / IAM M-273 / BP-1).